Here is a 430-residue protein sequence, read N- to C-terminus: MNFDVVIIGGGLAGLTCGIALQEQGKRCAIVNNGQAAMDFSTGSIDLLGRLPNGENVQKVDRALAGLSEQLPAHPYAKLGAERVLAKAKQFEGMAAKLNLGLAGSVEQNHARVTPLGGLRRTWLSPDSVPTVRPNEAFPYNNIVILGIEGYHDFQPQLLADNLKLQPQFAHCEIKPGFLTIPELDFLRRQSREFRSVHIAQTLEQKVNPASLINEIRQAASGADVVFLPACFGQNSQAFFNELQAATDFMLFELPTLPPSLLGGRQHNILRQYFERLGGVMMNGDRALRAEFEGNRVVKLFTRIHEDEPLAADNYVLASGSFFSNGLVAEFERIYEPVFGADIVQTERFDPSDHFTWTTRRFSAPQPYQSAGVVINTDCRVQKCGRFFDNLYAAGAVIGGFNGIELGCGSGVAVVTALTVADEIAEKSGG.

This sequence belongs to the anaerobic G-3-P dehydrogenase subunit B family. In terms of assembly, composed of a catalytic GlpA/B dimer and of membrane bound GlpC. FMN serves as cofactor.

It carries out the reaction a quinone + sn-glycerol 3-phosphate = dihydroxyacetone phosphate + a quinol. Its pathway is polyol metabolism; glycerol degradation via glycerol kinase pathway; glycerone phosphate from sn-glycerol 3-phosphate (anaerobic route): step 1/1. In terms of biological role, conversion of glycerol 3-phosphate to dihydroxyacetone. Uses fumarate or nitrate as electron acceptor. This is Anaerobic glycerol-3-phosphate dehydrogenase subunit B from Actinobacillus succinogenes (strain ATCC 55618 / DSM 22257 / CCUG 43843 / 130Z).